The sequence spans 311 residues: Porphobilinogen deaminase (311 aa).

Cys241 carries the post-translational modification S-(dipyrrolylmethanemethyl)cysteine.

This sequence belongs to the HMBS family. In terms of assembly, monomer. It depends on dipyrromethane as a cofactor.

It carries out the reaction 4 porphobilinogen + H2O = hydroxymethylbilane + 4 NH4(+). It participates in porphyrin-containing compound metabolism; protoporphyrin-IX biosynthesis; coproporphyrinogen-III from 5-aminolevulinate: step 2/4. Tetrapolymerization of the monopyrrole PBG into the hydroxymethylbilane pre-uroporphyrinogen in several discrete steps. The polypeptide is Porphobilinogen deaminase (Campylobacter curvus (strain 525.92)).